Reading from the N-terminus, the 204-residue chain is Putative peptidase PfaP (204 aa).

The first 27 residues, M1–S27, serve as a signal peptide directing secretion. The active-site Nucleophile is S19. K70 acts as the Proton donor/acceptor in catalysis.

Belongs to the peptidase S49 family.

Functionally, possible protease. May be involved in export of periplasmic flagella proteins. This Leptospira borgpetersenii protein is Putative peptidase PfaP (pfaP).